The primary structure comprises 79 residues: SGHLLLLLGLLTLWAELTPVSGAAKYCKLPLRIGPCKRKIPSFYYKWKAKQCLPFDYSGCGGNANRFKTIEECRRTCVG.

Residues 27–77 (CKLPLRIGPCKRKIPSFYYKWKAKQCLPFDYSGCGGNANRFKTIEECRRTC) form the BPTI/Kunitz inhibitor domain. Cystine bridges form between cysteine 27–cysteine 77, cysteine 36–cysteine 60, and cysteine 52–cysteine 73.

It belongs to the venom Kunitz-type family. As to expression, expressed by the venom gland.

The protein resides in the secreted. Functionally, serine protease inhibitor homolog that selectively blocks voltage-gated potassium channels homooligomer Kv1.1/KCNA1 (EC(50)=0.6 nM) and Kv1.1-containing heterooligomer. The polypeptide is Kunitz-type serine protease inhibitor homolog dendrotoxin K (Dendroaspis polylepis polylepis (Black mamba)).